The chain runs to 333 residues: MATLKEKLITPVAAGSTVPSNKITVVGVGQVGMACAISILGKGLCDELALVDVLEDKLKGEMMDLQHGSLFLQTHKIVADKDYAVTANSKIVVVTAGVRQQEGESRLNLVQRNVNVFKFIIPQIVKYSPNCTILVVSNPVDILTYVTWKLSGLPKHRVIGSGCNLDTARFRYLMAERLGIHPTSCHGWILGEHGDSSVAVWSGVNVAGVSLQELNPAMGTDKDSENWKEVHKQVVESAYEVIRLKGYTNWAIGLSVAELCETMLKNLYRVHSVSTLVKGTYGIENDVFLSLPCVLSASGLTSVINQKLKDDEVAQLKKSADTLWSIQKDLKDL.

NAD(+)-binding positions include 29 to 57 (GQVG…LEDK) and Arg99. Positions 106, 138, and 169 each coordinate substrate. Asn138 contributes to the NAD(+) binding site. Residue His193 is the Proton acceptor of the active site. A substrate-binding site is contributed by Thr248.

This sequence belongs to the LDH/MDH superfamily. LDH family. Homotetramer.

Its subcellular location is the cytoplasm. It carries out the reaction (S)-lactate + NAD(+) = pyruvate + NADH + H(+). It participates in fermentation; pyruvate fermentation to lactate; (S)-lactate from pyruvate: step 1/1. Its function is as follows. Interconverts simultaneously and stereospecifically pyruvate and lactate with concomitant interconversion of NADH and NAD(+). The protein is L-lactate dehydrogenase B chain (LDHB) of Gallus gallus (Chicken).